The primary structure comprises 73 residues: uncharacterized protein (73 aa).

This is an uncharacterized protein from Methanocaldococcus jannaschii (strain ATCC 43067 / DSM 2661 / JAL-1 / JCM 10045 / NBRC 100440) (Methanococcus jannaschii).